We begin with the raw amino-acid sequence, 139 residues long: MADKKSSPKKENPQDKTYAIVEASGKQFWLQPNRYYDFDRCQAEVDDVLTLENVLLLNDGKDLKLGKPYVKDAKVEIKVLEHRRGPKIIVYKMRPKKKTRRKNGHRQELTRVLVQSISIGSNTKKSKAVKTTASKVESE.

It belongs to the bacterial ribosomal protein bL21 family. As to quaternary structure, part of the 50S ribosomal subunit. Contacts protein L20.

Its function is as follows. This protein binds to 23S rRNA in the presence of protein L20. The protein is Large ribosomal subunit protein bL21 of Prochlorococcus marinus (strain NATL2A).